The following is a 189-amino-acid chain: Thymidine kinase (189 aa).

Residues 9 to 16 and 85 to 88 contribute to the ATP site; these read GTMNSGKT and DESQ. The active-site Proton acceptor is the E86. C143, C146, C180, and H183 together coordinate Zn(2+).

Belongs to the thymidine kinase family. In terms of assembly, homotetramer.

The protein resides in the cytoplasm. It carries out the reaction thymidine + ATP = dTMP + ADP + H(+). This Streptococcus pyogenes serotype M1 protein is Thymidine kinase.